A 190-amino-acid polypeptide reads, in one-letter code: Small ribosomal subunit protein uS5 (190 aa).

In terms of domain architecture, S5 DRBM spans 19 to 82 (IIDKLVTINR…ERAKRSMIRV (64 aa)). Positions 161–190 (SVASRRGKKVSDILGRREPVAGQEGEEAHA) are disordered. Over residues 169–179 (KVSDILGRREP) the composition is skewed to basic and acidic residues.

This sequence belongs to the universal ribosomal protein uS5 family. In terms of assembly, part of the 30S ribosomal subunit. Contacts proteins S4 and S8.

In terms of biological role, with S4 and S12 plays an important role in translational accuracy. Functionally, located at the back of the 30S subunit body where it stabilizes the conformation of the head with respect to the body. In Granulibacter bethesdensis (strain ATCC BAA-1260 / CGDNIH1), this protein is Small ribosomal subunit protein uS5.